The following is a 351-amino-acid chain: 3-hydroxy-4-methyl-anthranilyl-[aryl-carrier protein] 5-monooxygenase (351 aa).

It belongs to the aromatic-ring hydroxylase family. Requires FAD as cofactor.

It catalyses the reaction 3-hydroxy-4-methylanthranilyl-[aryl-carrier protein] + NADH + O2 + H(+) = 3,5-dihydroxy-4-methylanthranilyl-[aryl-carrier protein] + NAD(+) + H2O. The protein operates within antibiotic biosynthesis. Involved in the biosynthesis of the antitumor antibiotic sibiromycin. Hydroxylates the C5 position of the peptidyl carrier protein (PCP)-bound 4-methyl-3-hydroxyanthranilic acid (4-MHA or 3H4MAA), leading to the formation of the fully substituted anthranilate moiety found in sibiromycin. The chain is 3-hydroxy-4-methyl-anthranilyl-[aryl-carrier protein] 5-monooxygenase from Streptosporangium sibiricum.